Consider the following 276-residue polypeptide: Large ribosomal subunit protein uL2c (276 aa).

Residues 225-276 (AMNPVDHPHGGGEGRTPIGRKKPVTPWGYSALGKKSRKRNRYSDASILRRRE) form a disordered region.

The protein belongs to the universal ribosomal protein uL2 family. In terms of assembly, part of the 50S ribosomal subunit.

It is found in the plastid. The protein resides in the chloroplast. This Pinus koraiensis (Korean pine) protein is Large ribosomal subunit protein uL2c (rpl2).